Reading from the N-terminus, the 206-residue chain is Small ribosomal subunit protein uS4 (206 aa).

The S4 RNA-binding domain occupies 96 to 156; the sequence is GRLDNVVYRM…EKSKNQLRIQ (61 aa).

Belongs to the universal ribosomal protein uS4 family. In terms of assembly, part of the 30S ribosomal subunit. Contacts protein S5. The interaction surface between S4 and S5 is involved in control of translational fidelity.

Functionally, one of the primary rRNA binding proteins, it binds directly to 16S rRNA where it nucleates assembly of the body of the 30S subunit. Its function is as follows. With S5 and S12 plays an important role in translational accuracy. This is Small ribosomal subunit protein uS4 from Saccharophagus degradans (strain 2-40 / ATCC 43961 / DSM 17024).